The primary structure comprises 81 residues: ATP synthase subunit c, chloroplastic (81 aa).

Helical transmembrane passes span 7 to 27 (AASV…PGVG) and 57 to 77 (LAFM…LLFA).

Belongs to the ATPase C chain family. As to quaternary structure, F-type ATPases have 2 components, F(1) - the catalytic core - and F(0) - the membrane proton channel. F(1) has five subunits: alpha(3), beta(3), gamma(1), delta(1), epsilon(1). F(0) has four main subunits: a(1), b(1), b'(1) and c(10-14). The alpha and beta chains form an alternating ring which encloses part of the gamma chain. F(1) is attached to F(0) by a central stalk formed by the gamma and epsilon chains, while a peripheral stalk is formed by the delta, b and b' chains.

The protein resides in the plastid. Its subcellular location is the chloroplast thylakoid membrane. Functionally, f(1)F(0) ATP synthase produces ATP from ADP in the presence of a proton or sodium gradient. F-type ATPases consist of two structural domains, F(1) containing the extramembraneous catalytic core and F(0) containing the membrane proton channel, linked together by a central stalk and a peripheral stalk. During catalysis, ATP synthesis in the catalytic domain of F(1) is coupled via a rotary mechanism of the central stalk subunits to proton translocation. Key component of the F(0) channel; it plays a direct role in translocation across the membrane. A homomeric c-ring of between 10-14 subunits forms the central stalk rotor element with the F(1) delta and epsilon subunits. The chain is ATP synthase subunit c, chloroplastic from Arabis hirsuta (Hairy rock-cress).